A 456-amino-acid chain; its full sequence is Zinc finger C2HC domain-containing protein 1C (456 aa).

Disordered stretches follow at residues 16-46 (MLPHNTTEAPGPHSAKQDSYEQGDSSQQSLK) and 85-113 (YPHCTGISQQDPESDSQGQGNGLFYSSGP). Polar residues-rich tracts occupy residues 35 to 46 (YEQGDSSQQSLK) and 90 to 102 (GISQQDPESDSQG). Residues 211–265 (VQIRRLEAAGESLEEEIRRKQILLRGKLKKTEEELRRIQTQKEQAKENENGELQK) are a coiled coil. The tract at residues 336 to 388 (NKIRDPVSEPSVEKFSPPSETPVGALQGSARNSSLSMAPDSSGSSGSIEEPQL) is disordered. Low complexity predominate over residues 368 to 382 (SSLSMAPDSSGSSGS). The segment at 387-416 (QLGECSHCGRKFLSFRLERHSNICSRMRGS) adopts a C2HC/C3H-type zinc-finger fold. Cys-391, Cys-394, His-406, and Cys-410 together coordinate Zn(2+).

It belongs to the ZC2HC1 family. Zn(2+) is required as a cofactor.

The chain is Zinc finger C2HC domain-containing protein 1C (ZC2HC1C) from Homo sapiens (Human).